A 1847-amino-acid chain; its full sequence is Replication factor C small subunit (1847 aa).

DOD-type homing endonuclease domains lie at 179 to 311 (WLGY…RFGI), 780 to 927 (MLGL…ISGI), and 1348 to 1508 (LLGF…EFEV).

It belongs to the activator 1 small subunits family. RfcS subfamily. In terms of assembly, heteromultimer composed of small subunits (RfcS) and large subunits (RfcL). In terms of processing, this protein undergoes a protein self splicing that involves a post-translational excision of the intervening region (intein) followed by peptide ligation.

Its function is as follows. Part of the RFC clamp loader complex which loads the PCNA sliding clamp onto DNA. The chain is Replication factor C small subunit (rfcS) from Methanocaldococcus jannaschii (strain ATCC 43067 / DSM 2661 / JAL-1 / JCM 10045 / NBRC 100440) (Methanococcus jannaschii).